Reading from the N-terminus, the 435-residue chain is Serine--tRNA ligase (435 aa).

L-serine is bound at residue 242–244; the sequence is TAE. 273-275 serves as a coordination point for ATP; that stretch reads RSE. Glu296 provides a ligand contact to L-serine. 360 to 363 contributes to the ATP binding site; that stretch reads EISS. Ser396 is an L-serine binding site.

This sequence belongs to the class-II aminoacyl-tRNA synthetase family. Type-1 seryl-tRNA synthetase subfamily. Homodimer. The tRNA molecule binds across the dimer.

Its subcellular location is the cytoplasm. It catalyses the reaction tRNA(Ser) + L-serine + ATP = L-seryl-tRNA(Ser) + AMP + diphosphate + H(+). It carries out the reaction tRNA(Sec) + L-serine + ATP = L-seryl-tRNA(Sec) + AMP + diphosphate + H(+). It participates in aminoacyl-tRNA biosynthesis; selenocysteinyl-tRNA(Sec) biosynthesis; L-seryl-tRNA(Sec) from L-serine and tRNA(Sec): step 1/1. In terms of biological role, catalyzes the attachment of serine to tRNA(Ser). Is also able to aminoacylate tRNA(Sec) with serine, to form the misacylated tRNA L-seryl-tRNA(Sec), which will be further converted into selenocysteinyl-tRNA(Sec). This chain is Serine--tRNA ligase, found in Vibrio atlanticus (strain LGP32) (Vibrio splendidus (strain Mel32)).